Consider the following 270-residue polypeptide: uncharacterized protein (270 aa).

The disordered stretch occupies residues 166 to 186 (RRKENNISNESVSEEPESPLF).

This is an uncharacterized protein from Ostreid herpesvirus 1 (isolate France) (OsHV-1).